Consider the following 339-residue polypeptide: MKLAIVAGDGIGPEVVAQAVKVLDVVQPGVEKTNYDLGARRFHATGEILPDSVIAELREHDAILLGAIGDPSVPSGVLERGLLLRLRFELDHHINLRPGRLYPGVKSPLALEPGNPEIDFVVVREGTEGPYTGNGGAIRVGTANEVATEVSVNTAFGVRRVVRDAFERAMRRRKHLTLVHKNNVLTFAGSLWWRTVQEIGEEYPDVELAYQHVDAATIHMVTDPGRFDVIVTDNLFGDIITDLAAAVCGGIGLAASGNIDATRTNPSMFEPVHGSAPDIAGQGIADPTAAIMSVSLLLAHLGLDDAASRVDRAVEGYLATRGNERLATAAVGERIAAAL.

Substrate-binding residues include R87, R97, R124, and D214. Mg(2+)-binding residues include D214, D238, and D242. Position 274 to 286 (274 to 286) interacts with NAD(+); the sequence is GSAPDIAGQGIAD.

The protein belongs to the isocitrate and isopropylmalate dehydrogenases family. LeuB type 2 subfamily. Homodimer. Mg(2+) is required as a cofactor. It depends on Mn(2+) as a cofactor.

Its subcellular location is the cytoplasm. The catalysed reaction is (2R,3S)-3-isopropylmalate + NAD(+) = 4-methyl-2-oxopentanoate + CO2 + NADH. Its pathway is amino-acid biosynthesis; L-leucine biosynthesis; L-leucine from 3-methyl-2-oxobutanoate: step 3/4. In terms of biological role, catalyzes the oxidation of 3-carboxy-2-hydroxy-4-methylpentanoate (3-isopropylmalate) to 3-carboxy-4-methyl-2-oxopentanoate. The product decarboxylates to 4-methyl-2 oxopentanoate. The chain is 3-isopropylmalate dehydrogenase from Mycobacterium marinum (strain ATCC BAA-535 / M).